A 483-amino-acid chain; its full sequence is Pre-glycoprotein polyprotein GP complex (483 aa).

Glycine 2 carries N-myristoyl glycine; by host lipidation. The Extracellular segment spans residues 2 to 17 (GQLVSFIGEIPAIVHE). The helical transmembrane segment at 18 to 32 (ALNVALIAVSIIAIM) threads the bilayer. A topological domain (cytoplasmic) is located at residue lysine 33. Residues 34–53 (GLINIWKSGLFQLIMFLILA) form a helical membrane-spanning segment. Extracellular segments follow at residues 54 to 58 (GRSCS) and 59 to 422 (ISIG…SLVD). Residue cysteine 57 participates in Zn(2+) binding. 4 N-linked (GlcNAc...) asparagine; by host glycosylation sites follow: asparagine 73, asparagine 88, asparagine 130, and asparagine 179. 5 cysteine pairs are disulfide-bonded: cysteine 85/cysteine 223, cysteine 186/cysteine 204, cysteine 269/cysteine 282, cysteine 291/cysteine 300, and cysteine 354/cysteine 375. Asparagine 216 carries N-linked (GlcNAc...) asparagine; by host glycosylation. Residues asparagine 355, asparagine 363, asparagine 380, and asparagine 385 are each glycosylated (N-linked (GlcNAc...) asparagine; by host). A helical membrane pass occupies residues 423–443 (LCFWSTLFYTASIFLHLLHIP). The Cytoplasmic segment spans residues 444–483 (THRHIIGEGCPKPHRLTSDSLCACGFFQLKGRPTRWARIP). Histidine 445, histidine 447, cysteine 453, histidine 457, cysteine 465, and cysteine 467 together coordinate Zn(2+).

Belongs to the arenaviridae GPC protein family. As to quaternary structure, homotetramer; disulfide-linked. Homotetramer. GP2 homotetramers bind through ionic interactions with GP1 homotetramers to form the GP complex together with the stable signal peptide. The GP-C polyprotein interacts with the host protease MBTPS1/SKI-1 resulting in the polyprotein processing. Post-translationally, specific enzymatic cleavages in vivo yield mature proteins. GP-C polyprotein is cleaved in the endoplasmic reticulum by the host protease MBTPS1. Only cleaved glycoprotein is incorporated into virions. The SSP remains stably associated with the GP complex following cleavage by signal peptidase and plays crucial roles in the trafficking of GP through the secretory pathway. In terms of processing, myristoylation is necessary for GP2-mediated fusion activity.

The protein localises to the virion membrane. It localises to the host endoplasmic reticulum membrane. Its subcellular location is the host Golgi apparatus membrane. It is found in the host cell membrane. In terms of biological role, class I viral fusion protein that directs fusion of viral and host endosomal membranes, leading to delivery of the nucleocapsid into the cytoplasm. Membrane fusion is mediated by irreversible conformational changes induced upon acidification in the endosome. Stable signal peptide (SSP): cleaved and functions as a signal peptide. In addition, it is also retained as the third component of the GP complex. The SSP is required for efficient glycoprotein expression, post-translational maturation cleavage of GP1 and GP2, glycoprotein transport to the cell surface plasma membrane, formation of infectious virus particles, and acid pH-dependent glycoprotein-mediated cell fusion. Functionally, interacts with the host receptor. The protein is Pre-glycoprotein polyprotein GP complex of Peromyscus californicus (California mouse).